The primary structure comprises 501 residues: Solute carrier family 2, facilitated glucose transporter member 5 (501 aa).

M1 carries the N-acetylmethionine modification. Residues 1–18 lie on the Cytoplasmic side of the membrane; sequence MEQQDQSMKEGRLTLVLA. Residues 19–39 form a helical membrane-spanning segment; sequence LATLIAAFGSSFQYGYNVAAV. Y32 is a binding site for D-fructose. Over 40–68 the chain is Extracellular; it reads NSPALLMQQFYNETYYGRTGEFMEDFPLT. An N-linked (GlcNAc...) asparagine glycan is attached at N51. The helical transmembrane segment at 69–91 threads the bilayer; that stretch reads LLWSVTVSMFPFGGFIGSLLVGP. The Cytoplasmic portion of the chain corresponds to 92–98; sequence LVNKFGR. A helical transmembrane segment spans residues 99–119; the sequence is KGALLFNNIFSIVPAILMGCS. At 120–126 the chain is on the extracellular side; the sequence is RVATSFE. Residues 127-149 form a helical membrane-spanning segment; that stretch reads LIIISRLLVGICAGVSSNVVPMY. Residues 150-161 are Cytoplasmic-facing; that stretch reads LGELAPKNLRGA. The chain crosses the membrane as a helical span at residues 162–182; it reads LGVVPQLFITVGILVAQIFGL. Q167 provides a ligand contact to D-fructose. At 183 to 192 the chain is on the extracellular side; that stretch reads RNLLANVDGW. The helical transmembrane segment at 193–213 threads the bilayer; sequence PILLGLTGVPAALQLLLLPFF. At 214–277 the chain is on the cytoplasmic side; it reads PESPRYLLIQ…LFRMRSLRWQ (64 aa). Residues 278 to 298 form a helical membrane-spanning segment; it reads LLSIIVLMGGQQLSGVNAIYY. D-fructose-binding positions include Q288 and 296–298; that span reads IYY. Topologically, residues 299 to 313 are extracellular; it reads YADQIYLSAGVPEEH. Residues 314–334 traverse the membrane as a helical segment; it reads VQYVTAGTGAVNVVMTFCAVF. The Cytoplasmic portion of the chain corresponds to 335-342; that stretch reads VVELLGRR. Residues 343-363 traverse the membrane as a helical segment; the sequence is LLLLLGFSICLIACCVLTAAL. The Extracellular segment spans residues 364-371; that stretch reads ALQDTVSW. The chain crosses the membrane as a helical span at residues 372–394; sequence MPYISIVCVISYVIGHALGPSPI. Residue H387 coordinates D-fructose. The Cytoplasmic segment spans residues 395-412; that stretch reads PALLITEIFLQSSRPSAF. A helical transmembrane segment spans residues 413–433; sequence MVGGSVHWLSNFTVGLIFPFI. 419 to 420 contacts D-fructose; the sequence is HW. At 434 to 439 the chain is on the extracellular side; the sequence is QEGLGP. A helical transmembrane segment spans residues 440 to 460; it reads YSFIVFAVICLLTTIYIFLIV. At 461–501 the chain is on the cytoplasmic side; sequence PETKAKTFIEINQIFTKMNKVSEVYPEKEELKELPPVTSEQ.

Detected in skeletal muscle, and in jejunum brush border membrane and basolateral membrane (at protein level). Expressed in small intestine, and at much lower levels in kidney, skeletal muscle, and adipose tissue.

Its subcellular location is the apical cell membrane. The protein resides in the cell membrane. It is found in the sarcolemma. The catalysed reaction is D-fructose(out) = D-fructose(in). With respect to regulation, the uptake of 2-deoxyglucose is inhibited by cytochalasin B. Fructose transport is inhibited by the flavonoids epigallocatechin gallate and apigenin but not quercetin. In terms of biological role, functions as a fructose transporter that has only low activity with other monosaccharides. Can mediate the uptake of 2-deoxyglucose, but with low efficiency. Essential for fructose uptake in the small intestine. Plays a role in the regulation of salt uptake and blood pressure in response to dietary fructose. Required for the development of high blood pressure in response to high dietary fructose intake. This is Solute carrier family 2, facilitated glucose transporter member 5 from Homo sapiens (Human).